Consider the following 281-residue polypeptide: NADPH-dependent 7-cyano-7-deazaguanine reductase (281 aa).

81-83 is a substrate binding site; that stretch reads IES. 83 to 84 serves as a coordination point for NADPH; it reads SK. The Thioimide intermediate role is filled by Cys-188. Residue Asp-195 is the Proton donor of the active site. Residue 227 to 228 participates in substrate binding; it reads HE. 256–257 is an NADPH binding site; that stretch reads RG.

Belongs to the GTP cyclohydrolase I family. QueF type 2 subfamily. In terms of assembly, homodimer.

It localises to the cytoplasm. The catalysed reaction is 7-aminomethyl-7-carbaguanine + 2 NADP(+) = 7-cyano-7-deazaguanine + 2 NADPH + 3 H(+). Its pathway is tRNA modification; tRNA-queuosine biosynthesis. Functionally, catalyzes the NADPH-dependent reduction of 7-cyano-7-deazaguanine (preQ0) to 7-aminomethyl-7-deazaguanine (preQ1). The sequence is that of NADPH-dependent 7-cyano-7-deazaguanine reductase from Paracidovorax citrulli (strain AAC00-1) (Acidovorax citrulli).